Here is a 238-residue protein sequence, read N- to C-terminus: uncharacterized protein (238 aa).

This is an uncharacterized protein from Methanocaldococcus jannaschii (strain ATCC 43067 / DSM 2661 / JAL-1 / JCM 10045 / NBRC 100440) (Methanococcus jannaschii).